Consider the following 482-residue polypeptide: Long chain base biosynthesis protein 1c (482 aa).

Residues 33 to 53 traverse the membrane as a helical segment; it reads FGIHIDGHLVVEGLLIAAILF.

The protein belongs to the class-II pyridoxal-phosphate-dependent aminotransferase family. In terms of assembly, heterodimer with LCB2. Component of the serine palmitoyltransferase (SPT) complex, composed of LCB1 and LCB2. Pyridoxal 5'-phosphate is required as a cofactor.

It is found in the endoplasmic reticulum membrane. The catalysed reaction is L-serine + hexadecanoyl-CoA + H(+) = 3-oxosphinganine + CO2 + CoA. The protein operates within lipid metabolism; sphingolipid metabolism. Functionally, serine palmitoyltransferase (SPT). The heterodimer formed with LCB2 constitutes the catalytic core. The chain is Long chain base biosynthesis protein 1c from Oryza sativa subsp. japonica (Rice).